Reading from the N-terminus, the 372-residue chain is Glycerophosphodiester phosphodiesterase GDPD6 (372 aa).

Positions 1–21 are cleaved as a signal peptide; the sequence is MAFKYLLPLLLLSLLVANCAS. The segment at 32–58 is disordered; it reads KHATKKPLQTSRPYNLAHRGSNGELPE. A GP-PDE domain is found at 44-362; that stretch reads PYNLAHRGSN…DFTGSLHNYQ (319 aa). N-linked (GlcNAc...) asparagine glycans are attached at residues Asn-120, Asn-239, and Asn-260.

This sequence belongs to the glycerophosphoryl diester phosphodiesterase family. As to expression, expressed in flowers and siliques.

The catalysed reaction is a sn-glycero-3-phosphodiester + H2O = an alcohol + sn-glycerol 3-phosphate + H(+). The protein is Glycerophosphodiester phosphodiesterase GDPD6 of Arabidopsis thaliana (Mouse-ear cress).